The primary structure comprises 344 residues: N-acetyl-gamma-glutamyl-phosphate reductase (344 aa).

Cys148 is an active-site residue.

This sequence belongs to the NAGSA dehydrogenase family. Type 1 subfamily.

It localises to the cytoplasm. The catalysed reaction is N-acetyl-L-glutamate 5-semialdehyde + phosphate + NADP(+) = N-acetyl-L-glutamyl 5-phosphate + NADPH + H(+). It functions in the pathway amino-acid biosynthesis; L-arginine biosynthesis; N(2)-acetyl-L-ornithine from L-glutamate: step 3/4. Functionally, catalyzes the NADPH-dependent reduction of N-acetyl-5-glutamyl phosphate to yield N-acetyl-L-glutamate 5-semialdehyde. The chain is N-acetyl-gamma-glutamyl-phosphate reductase from Clostridium beijerinckii (strain ATCC 51743 / NCIMB 8052) (Clostridium acetobutylicum).